A 189-amino-acid polypeptide reads, in one-letter code: dCTP deaminase (189 aa).

DCTP contacts are provided by residues 112–117 (KSTYAR), 136–138 (TLE), Gln157, Tyr171, and Gln181. Glu138 functions as the Proton donor/acceptor in the catalytic mechanism.

This sequence belongs to the dCTP deaminase family. As to quaternary structure, homotrimer.

The catalysed reaction is dCTP + H2O + H(+) = dUTP + NH4(+). It participates in pyrimidine metabolism; dUMP biosynthesis; dUMP from dCTP (dUTP route): step 1/2. In terms of biological role, catalyzes the deamination of dCTP to dUTP. The sequence is that of dCTP deaminase from Nitrosospira multiformis (strain ATCC 25196 / NCIMB 11849 / C 71).